We begin with the raw amino-acid sequence, 267 residues long: NAD kinase 2 (267 aa).

The Proton acceptor role is filled by Asp52. Residues Asp52–Gly53, Asn124–Glu125, Arg151, Asp153, Thr164–Ser169, and Ala188 each bind NAD(+).

The protein belongs to the NAD kinase family. A divalent metal cation serves as cofactor.

The protein resides in the cytoplasm. It catalyses the reaction NAD(+) + ATP = ADP + NADP(+) + H(+). In terms of biological role, involved in the regulation of the intracellular balance of NAD and NADP, and is a key enzyme in the biosynthesis of NADP. Catalyzes specifically the phosphorylation on 2'-hydroxyl of the adenosine moiety of NAD to yield NADP. This chain is NAD kinase 2, found in Bacillus subtilis (strain 168).